A 349-amino-acid chain; its full sequence is PDZ and LIM domain protein 2 (349 aa).

The region spanning 1–84 (MALTVDVAGP…PLRLQLDRSQ (84 aa)) is the PDZ domain. Residues 74–147 (SPLRLQLDRS…TPPPTSPVAL (74 aa)) are disordered. The span at 81–94 (DRSQTASPGQTNGE) shows a compositional bias: polar residues. Residues S124, S127, S129, S134, and S137 each carry the phosphoserine modification. A phosphothreonine mark is found at T138 and T142. S143 and S163 each carry phosphoserine. Residues 169–212 (AHHLTYPGHPTSQQAGHSSPSDSAVRVLLHSPGRPSSPRFSSLD) are disordered. The segment covering 178-190 (PTSQQAGHSSPSD) has biased composition (polar residues). S199, S204, S205, S209, S210, and S263 each carry phosphoserine. A compositionally biased stretch (low complexity) spans 199–210 (SPGRPSSPRFSS). The region spanning 281–341 (HTCEKCSVNI…EKHARQRYSM (61 aa)) is the LIM zinc-binding domain.

Interacts with alpha-actinins ACTN1 and ACTN4, FLNA and MYH9. Interacts (via LIM zinc-binding domain) with MKRN2. Highly expressed in lung. Expressed at intermediate level in kidney, testis and spleen. Weakly expressed in heart and brain.

It is found in the cytoplasm. Its subcellular location is the cytoskeleton. Functionally, probable adapter protein located at the actin cytoskeleton that promotes cell attachment. Necessary for the migratory capacity of epithelial cells. Overexpression enhances cell adhesion to collagen and fibronectin and suppresses anchorage independent growth. May contribute to tumor cell migratory capacity. The sequence is that of PDZ and LIM domain protein 2 (Pdlim2) from Mus musculus (Mouse).